The chain runs to 447 residues: Exodeoxyribonuclease 7 large subunit (447 aa).

The protein belongs to the XseA family. Heterooligomer composed of large and small subunits.

It is found in the cytoplasm. The enzyme catalyses Exonucleolytic cleavage in either 5'- to 3'- or 3'- to 5'-direction to yield nucleoside 5'-phosphates.. Functionally, bidirectionally degrades single-stranded DNA into large acid-insoluble oligonucleotides, which are then degraded further into small acid-soluble oligonucleotides. In Lactiplantibacillus plantarum (strain ATCC BAA-793 / NCIMB 8826 / WCFS1) (Lactobacillus plantarum), this protein is Exodeoxyribonuclease 7 large subunit.